Here is a 1049-residue protein sequence, read N- to C-terminus: MGEIEQKPTPASRLGAPENSGISTLERGQKPPPTPSGKLMTVKIQMLDDTQEAFEVPQRAPGKVLFDAVCNHLNLVEGDYFGLEFPDHRKIVVWLDLLKPIVKQIRRPKHVLVKFVVKFFPPDHTQLQEELTRYLFALQVKQDLAQGRLTCNDTSAALLISHIVQSEIGDFDEALDREHLAKNKYVPQQDALEDKIVEFHHSHIGQTPAESDFQLLEVARRLEMYGIRLHPAKDREGTKINLAVANTGILVFQGFTKINAFNWAKVRKLSFKRKRFLIKLRPDVNSSYQDTLEFLMAGRDFCKSFWKICVEHHAFFRLFEEPKPKPKPVLFSRGSSFRFSGRTQKQVLDYVKEGGHKKVQFERKHSKIHSTRSLVSQPTAPNSEVPKQSPQSASLTFGEGTESPSAQSCQQAKETKVCTLEPGPRQSPALSKSPSGSKAADGTAAAAPPEEEDEEEGGKDGIRPSNPQPPQPSTGSLTGSPHLSELSINSQGGAAPANVTLSPNLSPDNKQASPLISPLLNDQACPRTDDEEEGRRKRFPTDKAYYIAKEVSTTERTYLKDLEVIASWFQSTVSKEDSMPEALKSLIFPNFEPLHKFHTNFLKEIEQRLALWEGRSNAHIRGDYQRIGDVMLKNIQGMKHLAAHLWKHSEALEALETSIKGSRRLEHFCRDFELQKVCYLPLNTFLLRPLHRLMHYKQVLERLCKHHPPNHADFRDCRAALAEITEMVAQLHGTMIKMENFQKLHELKKDLIGIDNLVIPGREFIRLGSLSKLSGKGLQQRMFFLFNDVLLYTSRGLTASNQFKVHGQLPLYGMTIEESEEEWGVPHCLTLRGQRQSIIVAASSRSEMEKWLEDIQMAIDLAEKSNGPTPELLASSPPDNKSPDEATAADQESEDDLSASRTSLERQAPHRGNTMVHVCWHRSTSVSMVDFSIAVENQLSGNLLRKFKNSNGWQKLWVVFTNFCLFFYKSHQDSHPLASLPLLGYSLTIPSESENIHKDYVFKLHFKSHVYYFRAESEYTFERWMEVIRSATSSASRAHSLSHKESHLY.

Positions 1–37 (MGEIEQKPTPASRLGAPENSGISTLERGQKPPPTPSG) are disordered. 2 positions are modified to phosphoserine: Ser20 and Ser23. Residue Thr24 is modified to Phosphothreonine. The FERM domain maps to 40 to 320 (MTVKIQMLDD…EHHAFFRLFE (281 aa)). Phosphoserine is present on residues Ser340, Ser373, Ser389, Ser403, Ser427, Ser433, and Ser437. A disordered region spans residues 361-537 (FERKHSKIHS…TDDEEEGRRK (177 aa)). Composition is skewed to polar residues over residues 371-395 (TRSLVSQPTAPNSEVPKQSPQSASL) and 402-412 (ESPSAQSCQQA). Low complexity predominate over residues 435 to 448 (SGSKAADGTAAAAP). Polar residues-rich tracts occupy residues 473 to 492 (STGSLTGSPHLSELSINSQG) and 499 to 514 (VTLSPNLSPDNKQASP). 2 positions are modified to phosphoserine: Ser513 and Ser517. Positions 543-734 (KAYYIAKEVS…TEMVAQLHGT (192 aa)) constitute a DH domain. The PH 1 domain maps to 763–860 (EFIRLGSLSK…WLEDIQMAID (98 aa)). Residues Ser837, Ser876, and Ser882 each carry the phosphoserine modification. The interval 866–908 (NGPTPELLASSPPDNKSPDEATAADQESEDDLSASRTSLERQA) is disordered. Thr887 is subject to Phosphothreonine. A phosphoserine mark is found at Ser893, Ser900, and Ser903. The PH 2 domain maps to 936–1033 (ENQLSGNLLR…WMEVIRSATS (98 aa)).

As to quaternary structure, interacts with CADM1. Interacts with RAC1. In terms of tissue distribution, detected in forbrain (at protein level).

Its subcellular location is the cell membrane. The protein localises to the synapse. The protein resides in the synaptosome. It localises to the cytoplasm. It is found in the cytosol. Its subcellular location is the cell projection. The protein localises to the filopodium. The protein resides in the dendrite. It localises to the dendritic spine. Functionally, may play a role in semaphorin signaling. Functions as a guanine nucleotide exchange factor for RAC1. Plays a role in the assembly and disassembly of dendritic filopodia, the formation of dendritic spines, regulation of dendrite length and ultimately the formation of synapses. In Rattus norvegicus (Rat), this protein is FERM, ARHGEF and pleckstrin domain-containing protein 1 (Farp1).